Consider the following 103-residue polypeptide: Large ribosomal subunit protein bL21 (103 aa).

This sequence belongs to the bacterial ribosomal protein bL21 family. As to quaternary structure, part of the 50S ribosomal subunit. Contacts protein L20.

Its function is as follows. This protein binds to 23S rRNA in the presence of protein L20. This Azoarcus sp. (strain BH72) protein is Large ribosomal subunit protein bL21.